We begin with the raw amino-acid sequence, 821 residues long: Integrator complex assembly factor BRAT1 (821 aa).

A required for interaction with NDFIP1 region spans residues 100 to 200 (PGLFGEPGPL…WPACAQKIMD (101 aa)). HEAT repeat units follow at residues 495–531 (PQFLRELFPVLQKRLCHPCWEVRDSALEFLTQLSRHW) and 544–576 (SEVPQLALQLLQDPESYVRASAVTAMGQLSSQG). The interval 741 to 767 (GSPNTASAEATLPRWRAGEQAQPPGDQ) is disordered. Serine 742 is modified (phosphoserine). The short motif at 819-821 (DCY) is the BRAT1-like motif element. Residue cysteine 820 coordinates Zn(2+).

It belongs to the BRAT1 family. In terms of assembly, part of the multiprotein complex composed of BRAT1, WDR73, as well as integrator complex subunits INTS9 and INTS11. Interacts with BRCA1 and ATM. Interacts with MTOR and RPTOR. Interacts with NDFIP1. Interacts with SMC1A and PRKDC. Ubiquitinated by NEDD4, NEDD4L and ITCH; mono- and polyubiquitinated forms are detected. As to expression, ubiquitously expressed.

The protein localises to the nucleus. It localises to the cytoplasm. Component of a multiprotein complex required for the assembly of the RNA endonuclease module of the integrator complex. Associates with INTS9 and INTS11 in the cytoplasm and blocks the active site of INTS11 to inhibit the endonuclease activity of INTS11 before formation of the full integrator complex. Following dissociation of WDR73 of the complex, BRAT1 facilitates the nuclear import of the INTS9-INTS11 heterodimer. In the nucleus, INTS4 is integrated to the INTS9-INTS11 heterodimer and BRAT1 is released from the mature RNA endonuclease module by inositol hexakisphosphate (InsP6). BRAT1 is also involved in DNA damage response; activates kinases ATM, SMC1A and PRKDC by modulating their phosphorylation status following ionizing radiation (IR) stress. Plays a role in regulating mitochondrial function and cell proliferation. Required for protein stability of MTOR and MTOR-related proteins, and cell cycle progress by growth factors. The protein is Integrator complex assembly factor BRAT1 of Homo sapiens (Human).